Consider the following 354-residue polypeptide: Uroporphyrinogen decarboxylase (354 aa).

Residues 27–31, Asp-77, Tyr-153, Thr-208, and His-326 each bind substrate; that span reads RQAGR.

The protein belongs to the uroporphyrinogen decarboxylase family. Homodimer.

Its subcellular location is the cytoplasm. The enzyme catalyses uroporphyrinogen III + 4 H(+) = coproporphyrinogen III + 4 CO2. The protein operates within porphyrin-containing compound metabolism; protoporphyrin-IX biosynthesis; coproporphyrinogen-III from 5-aminolevulinate: step 4/4. Catalyzes the decarboxylation of four acetate groups of uroporphyrinogen-III to yield coproporphyrinogen-III. This chain is Uroporphyrinogen decarboxylase, found in Neisseria gonorrhoeae (strain ATCC 700825 / FA 1090).